The primary structure comprises 343 residues: Retroviral-like aspartic protease 1 (343 aa).

Residues 1 to 55 (MGSPGASLGIKKALQSEQATALPASAPAVSQPTAPAPSCLPKAGQVIPTLLREAP) are Cytoplasmic-facing. Residues 1-190 (MGSPGASLGI…HLPKEIVFAN (190 aa)) constitute a propeptide that is removed on maturation. The helical transmembrane segment at 56–76 (FSSVIAPTLLCGFLFLAWVAA) threads the bilayer. Residues 77-343 (EVPEESSRMA…SEEGRQELSH (267 aa)) lie on the Extracellular side of the membrane. Residues 207–288 (VRFLVDSGAQ…AEEAIIGTDV (82 aa)) form the Peptidase A2 domain. Aspartate 212 is a catalytic residue. Asparagine 276 carries an N-linked (GlcNAc...) asparagine glycan. A propeptide spanning residues 327 to 343 (LIEEDPSSEEGRQELSH) is cleaved from the precursor.

Homodimer. Undergoes autocleavage which is necessary for activation of the protein. In terms of tissue distribution, expressed primarily in the granular layer of the epidermis and inner root sheath of hair follicles. In psoriatic skin, expressed throughout the stratum corneum. In ulcerated skin, expressed in the stratum granulosum of intact epidermis but almost absent from ulcerated regions. Expressed in differentiated areas of squamous cell carcinomas but not in undifferentiated tumors.

It is found in the membrane. Protease responsible for filaggrin processing, essential for the maintenance of a proper epidermis organization. The chain is Retroviral-like aspartic protease 1 from Homo sapiens (Human).